The primary structure comprises 404 residues: Sialidase (404 aa).

Residues 1–27 form the signal peptide; that stretch reads MKKFIKILKVLSMAIVLSACNINGIFA. Position 55 (arginine 55) interacts with substrate. The active-site Proton acceptor is aspartate 80. BNR repeat units follow at residues 89–100, 158–169, and 226–237; these read AKSTDNGQTWDY, VYSDDNGETWSD, and IYSKDNGETWTM. Position 263 (arginine 263) interacts with substrate. The BNR 4 repeat unit spans residues 273–284; that stretch reads YISYDMGSTWEV. The active-site Nucleophile is tyrosine 365.

Belongs to the glycosyl hydrolase 33 family. Post-translationally, it is possible that the sialidase is cleaved in front of a cysteine within the leader peptide, forming a glyceride thioether bond which links the protein to the membrane. A second proteolytic cleavage releases the mature extracellular protein.

Its subcellular location is the secreted. The enzyme catalyses Hydrolysis of alpha-(2-&gt;3)-, alpha-(2-&gt;6)-, alpha-(2-&gt;8)- glycosidic linkages of terminal sialic acid residues in oligosaccharides, glycoproteins, glycolipids, colominic acid and synthetic substrates.. Functionally, sialidases have been suggested to be pathogenic factors in microbial infections. The sequence is that of Sialidase from Paraclostridium sordellii (Clostridium sordellii).